We begin with the raw amino-acid sequence, 166 residues long: Regulator of ribonuclease activity A (166 aa).

Belongs to the RraA family. In terms of assembly, homotrimer. Binds to both RNA-binding sites in the C-terminal region of Rne and to RhlB.

It localises to the cytoplasm. Functionally, globally modulates RNA abundance by binding to RNase E (Rne) and regulating its endonucleolytic activity. Can modulate Rne action in a substrate-dependent manner by altering the composition of the degradosome. Modulates RNA-binding and helicase activities of the degradosome. The sequence is that of Regulator of ribonuclease activity A from Histophilus somni (strain 2336) (Haemophilus somnus).